A 72-amino-acid polypeptide reads, in one-letter code: Mitotic-spindle organizing protein 1 (72 aa).

The protein belongs to the MOZART1 family. As to quaternary structure, part of the gamma-tubulin complex.

The protein localises to the cytoplasm. It is found in the cytoskeleton. The protein resides in the microtubule organizing center. It localises to the centrosome. Its subcellular location is the spindle. Functionally, required for gamma-tubulin complex recruitment to the centrosome. In Xenopus laevis (African clawed frog), this protein is Mitotic-spindle organizing protein 1 (mzt1).